The primary structure comprises 228 residues: Deoxyribose-phosphate aldolase (228 aa).

Asp-93 functions as the Proton donor/acceptor in the catalytic mechanism. Lys-159 functions as the Schiff-base intermediate with acetaldehyde in the catalytic mechanism. The active-site Proton donor/acceptor is the Lys-188.

It belongs to the DeoC/FbaB aldolase family. DeoC type 1 subfamily.

The protein resides in the cytoplasm. The enzyme catalyses 2-deoxy-D-ribose 5-phosphate = D-glyceraldehyde 3-phosphate + acetaldehyde. Its pathway is carbohydrate degradation; 2-deoxy-D-ribose 1-phosphate degradation; D-glyceraldehyde 3-phosphate and acetaldehyde from 2-deoxy-alpha-D-ribose 1-phosphate: step 2/2. Functionally, catalyzes a reversible aldol reaction between acetaldehyde and D-glyceraldehyde 3-phosphate to generate 2-deoxy-D-ribose 5-phosphate. In Carboxydothermus hydrogenoformans (strain ATCC BAA-161 / DSM 6008 / Z-2901), this protein is Deoxyribose-phosphate aldolase.